The chain runs to 272 residues: Protein STAY-GREEN 1, chloroplastic (272 aa).

A chloroplast-targeting transit peptide spans 1–50 (MGTLTTSLVVPSKLNNEQQSSIFIHKTRRKCKKNQSIVPVARLFGPAIFE). The segment at 201-222 (TSPSSSSGGVGGVKSTSFTSNS) is disordered.

This sequence belongs to the staygreen family. Interacts with PSY1.

The protein localises to the plastid. The protein resides in the chloroplast. Required to trigger chlorophyll degradation during leaf senescence and fruit ripening. Binds directly PSY1 to regulate the accumulation of lycopene and beta-carotene in the maturing fruits. In Solanum lycopersicum (Tomato), this protein is Protein STAY-GREEN 1, chloroplastic.